The chain runs to 317 residues: Acetyl-coenzyme A carboxylase carboxyl transferase subunit alpha (317 aa).

One can recognise a CoA carboxyltransferase C-terminal domain in the interval 33-294 (NLDDEITRLQ…KKRLLADLAD (262 aa)).

It belongs to the AccA family. In terms of assembly, acetyl-CoA carboxylase is a heterohexamer composed of biotin carboxyl carrier protein (AccB), biotin carboxylase (AccC) and two subunits each of ACCase subunit alpha (AccA) and ACCase subunit beta (AccD).

It is found in the cytoplasm. The enzyme catalyses N(6)-carboxybiotinyl-L-lysyl-[protein] + acetyl-CoA = N(6)-biotinyl-L-lysyl-[protein] + malonyl-CoA. It participates in lipid metabolism; malonyl-CoA biosynthesis; malonyl-CoA from acetyl-CoA: step 1/1. Component of the acetyl coenzyme A carboxylase (ACC) complex. First, biotin carboxylase catalyzes the carboxylation of biotin on its carrier protein (BCCP) and then the CO(2) group is transferred by the carboxyltransferase to acetyl-CoA to form malonyl-CoA. This is Acetyl-coenzyme A carboxylase carboxyl transferase subunit alpha from Histophilus somni (strain 129Pt) (Haemophilus somnus).